A 394-amino-acid chain; its full sequence is Carbamoyl phosphate synthase small chain (394 aa).

A CPSase region spans residues 1–188; the sequence is MIRKERAILA…PLPYAFPTLR (188 aa). L-glutamine is bound by residues S49, G240, and G242. The 188-residue stretch at 192 to 379 folds into the Glutamine amidotransferase type-1 domain; the sequence is RVVLMDFGIK…IEEIDAFEGA (188 aa). C267 (nucleophile) is an active-site residue. L-glutamine is bound by residues L268, Q271, N309, G311, and Y312. Catalysis depends on residues H352 and E354.

The protein belongs to the CarA family. As to quaternary structure, composed of two chains; the small (or glutamine) chain promotes the hydrolysis of glutamine to ammonia, which is used by the large (or ammonia) chain to synthesize carbamoyl phosphate. Tetramer of heterodimers (alpha,beta)4.

The catalysed reaction is hydrogencarbonate + L-glutamine + 2 ATP + H2O = carbamoyl phosphate + L-glutamate + 2 ADP + phosphate + 2 H(+). It catalyses the reaction L-glutamine + H2O = L-glutamate + NH4(+). It participates in amino-acid biosynthesis; L-arginine biosynthesis; carbamoyl phosphate from bicarbonate: step 1/1. Its pathway is pyrimidine metabolism; UMP biosynthesis via de novo pathway; (S)-dihydroorotate from bicarbonate: step 1/3. Functionally, small subunit of the glutamine-dependent carbamoyl phosphate synthetase (CPSase). CPSase catalyzes the formation of carbamoyl phosphate from the ammonia moiety of glutamine, carbonate, and phosphate donated by ATP, constituting the first step of 2 biosynthetic pathways, one leading to arginine and/or urea and the other to pyrimidine nucleotides. The small subunit (glutamine amidotransferase) binds and cleaves glutamine to supply the large subunit with the substrate ammonia. This Deinococcus geothermalis (strain DSM 11300 / CIP 105573 / AG-3a) protein is Carbamoyl phosphate synthase small chain.